A 2381-amino-acid chain; its full sequence is Myb-like protein U (2381 aa).

Disordered stretches follow at residues 1–85 (MKTK…TSNN), 148–167 (SSSGTVNNSNNNNNNDGGIS), 178–492 (PTIP…NNNN), and 641–696 (NINN…GDEM). Composition is skewed to low complexity over residues 30–41 (SKSSSKVSQSSS) and 64–79 (TIPAPLSTTITPPTLT). Composition is skewed to low complexity over residues 192–204 (NLSSSTSSTNILS), 225–261 (ENVNNINSGNVKNSKNNSGSSISSSISSSSSSGSSSS), and 291–315 (SNKSNSKKSSSNKSKSPSNKNNNKK). Residues 331–343 (SEYDSSDSSDMDL) show a composition bias toward acidic residues. Low complexity predominate over residues 363–405 (TTKPNNSNSNNNNNNNSINSTIPASNNINSANNSKTTNKNITS). Residues 421–430 (SETPILTSVK) show a composition bias toward polar residues. Composition is skewed to low complexity over residues 435 to 492 (QQIP…NNNN) and 641 to 692 (NINN…NNNN). The region spanning 856 to 899 (WHEEEKLLFRELFCAYGRDWQMVSTLMCGTKSPTQIKNFYYDVR) is the Myb-like domain. Disordered stretches follow at residues 932 to 1024 (KPEQ…ETPP), 1068 to 1093 (INQSSNSSPVNNNNSNNNNNNNNINP), 1145 to 1207 (TSST…SNQE), 1295 to 1339 (STTT…PPID), 1422 to 1474 (PYYP…LSTP), 1597 to 1647 (PPAT…TTIV), 1667 to 1849 (PIVK…PPPV), 1961 to 1985 (TTVPGTTTTTNPNGSIPPKPSNGLA), 2055 to 2106 (TSTV…NGLT), and 2122 to 2280 (LSGI…NKND). Over residues 936–953 (NVNSNNNNNGGGNSLKDG) the composition is skewed to low complexity. Residues 982 to 995 (VKKKSRTASKRSFR) show a composition bias toward basic residues. Over residues 1000 to 1013 (ANETNRTPKNQPKP) the composition is skewed to polar residues. 4 stretches are compositionally biased toward low complexity: residues 1069–1092 (NQSSNSSPVNNNNSNNNNNNNNIN), 1145–1186 (TSST…TGSA), 1195–1205 (VNNNNNNNLSN), and 1306–1325 (TTTPTQQQFQQLQPTQQLQQ). The span at 1326–1337 (LPPPPPPPPKPP) shows a compositional bias: pro residues. Positions 1427 to 1474 (PSSTTTNSATSTPTSTPTSTPSTSASTLTPTSTPTSTPVPAPTSLSTP) are enriched in low complexity. Residues 1597–1606 (PPATITPILP) show a composition bias toward pro residues. The segment covering 1618–1637 (SSSSSSSSSSSSSSSSSSSS) has biased composition (low complexity). 2 stretches are compositionally biased toward polar residues: residues 1638–1647 (TTKNNSTTIV) and 1671–1701 (QESNSPSKTLPPSNSPSKTLPLSNSPSKTLL). Low complexity-rich tracts occupy residues 1702 to 1735 (PSNSSIPNKSTPSPIPKPTTSSTTYPVTTSNPSS) and 1743 to 1809 (TSNK…TLKP). A compositionally biased stretch (polar residues) spans 1829–1844 (APTNSTNQNTIPNATT). Low complexity-rich tracts occupy residues 1961–1970 (TTVPGTTTTT) and 2065–2097 (NNMTTTTTSSTSTTMTTPTSTNTTTNGTPQQST). The span at 2129 to 2138 (NTLSGKSPTP) shows a compositional bias: polar residues. The span at 2154 to 2209 (PSLSSSSANPISITNNTTSLSQQSNTTNTMPSTVSLSSGSTSINSNSSNSKSLRSP) shows a compositional bias: low complexity. The segment covering 2210–2278 (KSSDNDGKES…NNNDKFDSNK (69 aa)) has biased composition (basic and acidic residues).

The sequence is that of Myb-like protein U (mybU) from Dictyostelium discoideum (Social amoeba).